We begin with the raw amino-acid sequence, 233 residues long: 5'-methylthioadenosine/S-adenosylhomocysteine nucleosidase (233 aa).

The active-site Proton acceptor is the glutamate 12. Residues glycine 78, isoleucine 156, and 177–178 contribute to the substrate site; that span reads ME. Aspartate 201 functions as the Proton donor in the catalytic mechanism.

It belongs to the PNP/UDP phosphorylase family. MtnN subfamily.

The catalysed reaction is S-adenosyl-L-homocysteine + H2O = S-(5-deoxy-D-ribos-5-yl)-L-homocysteine + adenine. It catalyses the reaction S-methyl-5'-thioadenosine + H2O = 5-(methylsulfanyl)-D-ribose + adenine. It carries out the reaction 5'-deoxyadenosine + H2O = 5-deoxy-D-ribose + adenine. It participates in amino-acid biosynthesis; L-methionine biosynthesis via salvage pathway; S-methyl-5-thio-alpha-D-ribose 1-phosphate from S-methyl-5'-thioadenosine (hydrolase route): step 1/2. Catalyzes the irreversible cleavage of the glycosidic bond in both 5'-methylthioadenosine (MTA) and S-adenosylhomocysteine (SAH/AdoHcy) to adenine and the corresponding thioribose, 5'-methylthioribose and S-ribosylhomocysteine, respectively. Also cleaves 5'-deoxyadenosine, a toxic by-product of radical S-adenosylmethionine (SAM) enzymes, into 5-deoxyribose and adenine. The protein is 5'-methylthioadenosine/S-adenosylhomocysteine nucleosidase of Listeria monocytogenes serovar 1/2a (strain ATCC BAA-679 / EGD-e).